Consider the following 53-residue polypeptide: Large ribosomal subunit protein bL32c (53 aa).

It belongs to the bacterial ribosomal protein bL32 family.

It is found in the plastid. The protein resides in the chloroplast. The chain is Large ribosomal subunit protein bL32c from Coffea arabica (Arabian coffee).